The following is a 122-amino-acid chain: Large ribosomal subunit protein uL14 (122 aa).

This sequence belongs to the universal ribosomal protein uL14 family. Part of the 50S ribosomal subunit. Forms a cluster with proteins L3 and L19. In the 70S ribosome, L14 and L19 interact and together make contacts with the 16S rRNA in bridges B5 and B8.

In terms of biological role, binds to 23S rRNA. Forms part of two intersubunit bridges in the 70S ribosome. The chain is Large ribosomal subunit protein uL14 from Xylella fastidiosa (strain 9a5c).